A 180-amino-acid polypeptide reads, in one-letter code: Small ribosomal subunit protein uS4 (180 aa).

One can recognise an S4 RNA-binding domain in the interval Arg-103–Ala-174.

The protein belongs to the universal ribosomal protein uS4 family. In terms of assembly, part of the 30S ribosomal subunit. Contacts protein S5. The interaction surface between S4 and S5 is involved in control of translational fidelity.

In terms of biological role, one of the primary rRNA binding proteins, it binds directly to 16S rRNA where it nucleates assembly of the body of the 30S subunit. Its function is as follows. With S5 and S12 plays an important role in translational accuracy. The chain is Small ribosomal subunit protein uS4 from Pyrococcus horikoshii (strain ATCC 700860 / DSM 12428 / JCM 9974 / NBRC 100139 / OT-3).